The chain runs to 241 residues: uncharacterized protein (241 aa).

Belongs to the AB hydrolase superfamily. AB hydrolase 2 family.

This is an uncharacterized protein from Schizosaccharomyces pombe (strain 972 / ATCC 24843) (Fission yeast).